Reading from the N-terminus, the 203-residue chain is NAD(P)H-quinone oxidoreductase subunit I (203 aa).

4Fe-4S ferredoxin-type domains follow at residues Gly55–Glu84 and Lys95–Glu124. [4Fe-4S] cluster-binding residues include Cys64, Cys67, Cys70, Cys74, Cys104, Cys107, Cys110, and Cys114.

Belongs to the complex I 23 kDa subunit family. In terms of assembly, NDH-1 is composed of at least 11 different subunits. [4Fe-4S] cluster serves as cofactor.

The protein resides in the cellular thylakoid membrane. The catalysed reaction is a plastoquinone + NADH + (n+1) H(+)(in) = a plastoquinol + NAD(+) + n H(+)(out). The enzyme catalyses a plastoquinone + NADPH + (n+1) H(+)(in) = a plastoquinol + NADP(+) + n H(+)(out). NDH-1 shuttles electrons from an unknown electron donor, via FMN and iron-sulfur (Fe-S) centers, to quinones in the respiratory and/or the photosynthetic chain. The immediate electron acceptor for the enzyme in this species is believed to be plastoquinone. Couples the redox reaction to proton translocation, and thus conserves the redox energy in a proton gradient. In Picosynechococcus sp. (strain ATCC 27264 / PCC 7002 / PR-6) (Agmenellum quadruplicatum), this protein is NAD(P)H-quinone oxidoreductase subunit I (ndhI).